The chain runs to 985 residues: Probable oxidoreductase YjgC (985 aa).

In terms of domain architecture, 2Fe-2S ferredoxin-type spans 3–79 (GKKTITINGV…GDVIDTLSPD (77 aa)). Residues Cys37, Cys48, Cys51, and Cys63 each coordinate [2Fe-2S] cluster. One can recognise a 4Fe-4S His(Cys)3-ligated-type domain in the interval 79–119 (DVKKAQVIGMDKILYNHELYCTVCDYNNGGCEIHNTVKEMK). The [4Fe-4S] cluster site is built by His95, Cys99, Cys102, Cys109, Cys148, Cys151, Cys154, Cys158, Cys191, Cys194, Cys197, Cys201, Cys265, Cys268, Cys272, and Cys300. 4Fe-4S ferredoxin-type domains lie at 139–170 (PFYR…LTID) and 182–211 (NDVP…EKGM). The 4Fe-4S Mo/W bis-MGD-type domain occupies 258 to 314 (IKKTKTVCTYCGVGCSFDVWTKGRDILKVEPQEEAPANGISTCVKGKFGWDFVNSEE).

In the C-terminal section; belongs to the prokaryotic molybdopterin-containing oxidoreductase family. [2Fe-2S] cluster serves as cofactor. [4Fe-4S] cluster is required as a cofactor. Requires Mo-bis(molybdopterin guanine dinucleotide) as cofactor.

The protein is Probable oxidoreductase YjgC (yjgC) of Bacillus subtilis (strain 168).